We begin with the raw amino-acid sequence, 149 residues long: Deoxyuridine 5'-triphosphate nucleotidohydrolase (149 aa).

Residues Arg-68–Gly-70, Asn-81, Leu-85–Asp-87, and Met-95 each bind substrate.

It belongs to the dUTPase family. The cofactor is Mg(2+).

It carries out the reaction dUTP + H2O = dUMP + diphosphate + H(+). The protein operates within pyrimidine metabolism; dUMP biosynthesis; dUMP from dCTP (dUTP route): step 2/2. Functionally, this enzyme is involved in nucleotide metabolism: it produces dUMP, the immediate precursor of thymidine nucleotides and it decreases the intracellular concentration of dUTP so that uracil cannot be incorporated into DNA. The chain is Deoxyuridine 5'-triphosphate nucleotidohydrolase from Albidiferax ferrireducens (strain ATCC BAA-621 / DSM 15236 / T118) (Rhodoferax ferrireducens).